Consider the following 78-residue polypeptide: Protein SlyX homolog (78 aa).

Belongs to the SlyX family.

The polypeptide is Protein SlyX homolog (Xanthomonas euvesicatoria pv. vesicatoria (strain 85-10) (Xanthomonas campestris pv. vesicatoria)).